The sequence spans 182 residues: Probable tyrosine phosphatase protein H4 (182 aa).

Positions 1–182 constitute a Tyrosine-protein phosphatase domain; the sequence is MEINKFICSQ…TVLKIQKSKI (182 aa). The active-site Phosphocysteine intermediate is the Cys142.

Belongs to the protein-tyrosine phosphatase family.

It carries out the reaction O-phospho-L-tyrosyl-[protein] + H2O = L-tyrosyl-[protein] + phosphate. The protein is Probable tyrosine phosphatase protein H4 (H5) of Microplitis demolitor (Parasitoid wasp).